Reading from the N-terminus, the 107-residue chain is Putative pterin-4-alpha-carbinolamine dehydratase (107 aa).

It belongs to the pterin-4-alpha-carbinolamine dehydratase family.

The catalysed reaction is (4aS,6R)-4a-hydroxy-L-erythro-5,6,7,8-tetrahydrobiopterin = (6R)-L-erythro-6,7-dihydrobiopterin + H2O. This chain is Putative pterin-4-alpha-carbinolamine dehydratase, found in Rubrobacter xylanophilus (strain DSM 9941 / JCM 11954 / NBRC 16129 / PRD-1).